The following is a 134-amino-acid chain: MSSKVIDKIMSFLGIEEEEEEIQTPQPVVSYDRRPKVVNIHTNPQIKVLISKPEKFEQVLSICNELKSKKPVIVDLQKMDKSEAQRVVDFLSGAVYALNGEITKISGYIFLVAPENFDVTGDIKEEVNALYNLN.

Belongs to the SepF family. As to quaternary structure, homodimer. Interacts with FtsZ.

Its subcellular location is the cytoplasm. Cell division protein that is part of the divisome complex and is recruited early to the Z-ring. Probably stimulates Z-ring formation, perhaps through the cross-linking of FtsZ protofilaments. Its function overlaps with FtsA. This Caldanaerobacter subterraneus subsp. tengcongensis (strain DSM 15242 / JCM 11007 / NBRC 100824 / MB4) (Thermoanaerobacter tengcongensis) protein is Cell division protein SepF.